The chain runs to 399 residues: Serine/threonine transporter SstT (399 aa).

9 consecutive transmembrane segments (helical) span residues 8–28 (LSLV…AFLF), 37–57 (IFGE…VFVL), 77–97 (ILFL…IADL), 134–154 (PVVA…IILG), 178–198 (VIHL…AVTF), 212–232 (LLLV…PIMV), 284–304 (VIIP…ITVL), 312–332 (LGIS…SISA), and 348–370 (VACS…GMVI).

It belongs to the dicarboxylate/amino acid:cation symporter (DAACS) (TC 2.A.23) family.

The protein localises to the cell inner membrane. The catalysed reaction is L-serine(in) + Na(+)(in) = L-serine(out) + Na(+)(out). It carries out the reaction L-threonine(in) + Na(+)(in) = L-threonine(out) + Na(+)(out). Involved in the import of serine and threonine into the cell, with the concomitant import of sodium (symport system). This is Serine/threonine transporter SstT from Acinetobacter baylyi (strain ATCC 33305 / BD413 / ADP1).